We begin with the raw amino-acid sequence, 252 residues long: Imidazole glycerol phosphate synthase subunit HisF (252 aa).

Active-site residues include aspartate 11 and aspartate 130.

The protein belongs to the HisA/HisF family. Heterodimer of HisH and HisF.

It is found in the cytoplasm. The catalysed reaction is 5-[(5-phospho-1-deoxy-D-ribulos-1-ylimino)methylamino]-1-(5-phospho-beta-D-ribosyl)imidazole-4-carboxamide + L-glutamine = D-erythro-1-(imidazol-4-yl)glycerol 3-phosphate + 5-amino-1-(5-phospho-beta-D-ribosyl)imidazole-4-carboxamide + L-glutamate + H(+). The protein operates within amino-acid biosynthesis; L-histidine biosynthesis; L-histidine from 5-phospho-alpha-D-ribose 1-diphosphate: step 5/9. IGPS catalyzes the conversion of PRFAR and glutamine to IGP, AICAR and glutamate. The HisF subunit catalyzes the cyclization activity that produces IGP and AICAR from PRFAR using the ammonia provided by the HisH subunit. The protein is Imidazole glycerol phosphate synthase subunit HisF of Acinetobacter baylyi (strain ATCC 33305 / BD413 / ADP1).